Here is a 512-residue protein sequence, read N- to C-terminus: GMP synthase [glutamine-hydrolyzing] (512 aa).

The Glutamine amidotransferase type-1 domain occupies 3–196; sequence NILILDFGSQ…VKHICQASET (194 aa). Cys-80 acts as the Nucleophile in catalysis. Catalysis depends on residues His-169 and Glu-171. The GMPS ATP-PPase domain occupies 197 to 387; sequence WKIETIEKQL…LGLPDVLISR (191 aa). 225–231 serves as a coordination point for ATP; that stretch reads SGGVDSS.

Homodimer.

The enzyme catalyses XMP + L-glutamine + ATP + H2O = GMP + L-glutamate + AMP + diphosphate + 2 H(+). It functions in the pathway purine metabolism; GMP biosynthesis; GMP from XMP (L-Gln route): step 1/1. Functionally, catalyzes the synthesis of GMP from XMP. The polypeptide is GMP synthase [glutamine-hydrolyzing] (Chlamydia caviae (strain ATCC VR-813 / DSM 19441 / 03DC25 / GPIC) (Chlamydophila caviae)).